The chain runs to 1057 residues: Diacylglycerol kinase iota (1057 aa).

Residues 15-59 are compositionally biased toward low complexity; that stretch reads AARGPARAPAAAAAAAASPPGPCSGAACAPSAAAGAGAMNPSSSA. Disordered regions lie at residues 15 to 74 and 334 to 358; these read AARG…SSGS and LKAS…MEQE. Residues 337-352 show a composition bias toward basic residues; it reads SNRKKKRTSFKRKASK. Residues 372-507 enclose the DAGKc domain; it reads PLMKPLLVFV…DRWNLHVERN (136 aa). 2 ANK repeats span residues 950-979 and 986-1015; these read DHCS…SELL and TGET…SLRK. Over residues 1014 to 1024 the composition is skewed to basic and acidic residues; the sequence is RKTDSKGKTPQ. The disordered stretch occupies residues 1014–1033; the sequence is RKTDSKGKTPQERAQQAGDP. The PDZ-binding signature appears at 1055-1057; the sequence is TAV.

It belongs to the eukaryotic diacylglycerol kinase family. In terms of assembly, interacts (via PDZ-binding motif) with DLG4; controls the localization of DGKI to the synapse. Interacts (via PDZ-binding motif) with DLG1. Interacts (via PDZ-binding motif) with DLG2. Interacts (via PDZ-binding motif) with DLG3. May interact with RASGRP3; involved in the regulation of RASGRP3 activity. Specifically expressed in brain and retina. In brain, highly expressed in hippocampus, caudate nucleus, occipital pole, cerebral cortex, and cerebellum. Also detected in kidney.

The protein resides in the cell projection. It is found in the axon. Its subcellular location is the dendrite. The protein localises to the presynapse. It localises to the postsynapse. The protein resides in the postsynaptic density. It is found in the synaptic cell membrane. Its subcellular location is the cytoplasmic vesicle. The protein localises to the secretory vesicle. It localises to the synaptic vesicle membrane. The protein resides in the cytoplasm. It is found in the cytosol. Its subcellular location is the nucleus. The enzyme catalyses a 1,2-diacyl-sn-glycerol + ATP = a 1,2-diacyl-sn-glycero-3-phosphate + ADP + H(+). The catalysed reaction is 1,2-di-(9Z-octadecenoyl)-sn-glycerol + ATP = 1,2-di-(9Z-octadecenoyl)-sn-glycero-3-phosphate + ADP + H(+). It catalyses the reaction 1-octadecanoyl-2-(5Z,8Z,11Z,14Z-eicosatetraenoyl)-sn-glycerol + ATP = 1-octadecanoyl-2-(5Z,8Z,11Z,14Z-eicosatetraenoyl)-sn-glycero-3-phosphate + ADP + H(+). It carries out the reaction 1-octadecanoyl-2-(9Z,12Z)-octadecadienoyl-sn-glycerol + ATP = 1-octadecanoyl-2-(9Z,12Z-octadecadienoyl)-sn-glycero-3-phosphate + ADP + H(+). It functions in the pathway lipid metabolism; glycerolipid metabolism. In terms of biological role, diacylglycerol kinase that converts diacylglycerol/DAG into phosphatidic acid/phosphatidate/PA and regulates the respective levels of these two bioactive lipids. Thereby, acts as a central switch between the signaling pathways activated by these second messengers with different cellular targets and opposite effects in numerous biological processes. Has probably no preference for any of the diacylglycerols in terms of the acyl chain composition, especially for the acyl chain at the sn-2 position. By controlling the diacylglycerol/DAG-mediated activation of RASGRP3, negatively regulates the Rap1 signaling pathway. May play a role in presynaptic diacylglycerol/DAG signaling and control neurotransmitter release during metabotropic glutamate receptor-dependent long-term depression. The sequence is that of Diacylglycerol kinase iota from Homo sapiens (Human).